A 752-amino-acid polypeptide reads, in one-letter code: Catalase-peroxidase 1 (752 aa).

The tract at residues 1–45 (MPPNTPDASDARPPQADTETHSHSESENPVIESPKPKAHAPLTNQ) is disordered. A cross-link (tryptophyl-tyrosyl-methioninium (Trp-Tyr) (with M-270)) is located at residues 116–244 (WHAAGTYRIF…YGATTMGLIY (129 aa)). H117 (proton acceptor) is an active-site residue. Residues 244–270 (YVNPEGPEGKPDPLAAAHDIRETFGRM) constitute a cross-link (tryptophyl-tyrosyl-methioninium (Tyr-Met) (with W-116)). Position 285 (H285) interacts with heme b.

It belongs to the peroxidase family. Peroxidase/catalase subfamily. In terms of assembly, homodimer or homotetramer. Requires heme b as cofactor. In terms of processing, formation of the three residue Trp-Tyr-Met cross-link is important for the catalase, but not the peroxidase activity of the enzyme.

It carries out the reaction H2O2 + AH2 = A + 2 H2O. The enzyme catalyses 2 H2O2 = O2 + 2 H2O. Its function is as follows. Bifunctional enzyme with both catalase and broad-spectrum peroxidase activity. May play a role in the intracellular survival of mycobacteria. The sequence is that of Catalase-peroxidase 1 from Mycolicibacterium fortuitum (Mycobacterium fortuitum).